The following is a 250-amino-acid chain: 2,3-bisphosphoglycerate-dependent phosphoglycerate mutase (250 aa).

Substrate is bound by residues R10–N17, T23–G24, R62, E89–Y92, K100, R116–R117, and G185–N186. H11 serves as the catalytic Tele-phosphohistidine intermediate. E89 (proton donor/acceptor) is an active-site residue.

Belongs to the phosphoglycerate mutase family. BPG-dependent PGAM subfamily. In terms of assembly, homodimer.

The enzyme catalyses (2R)-2-phosphoglycerate = (2R)-3-phosphoglycerate. Its pathway is carbohydrate degradation; glycolysis; pyruvate from D-glyceraldehyde 3-phosphate: step 3/5. Its function is as follows. Catalyzes the interconversion of 2-phosphoglycerate and 3-phosphoglycerate. This is 2,3-bisphosphoglycerate-dependent phosphoglycerate mutase from Sodalis glossinidius (strain morsitans).